Consider the following 552-residue polypeptide: Hydroxylamine reductase (552 aa).

[2Fe-2S] cluster-binding residues include Cys-5, Cys-8, Cys-20, and Cys-27. His-251, Glu-275, Cys-319, Cys-407, Cys-435, Cys-460, Glu-494, and Lys-496 together coordinate hybrid [4Fe-2O-2S] cluster. The residue at position 407 (Cys-407) is a Cysteine persulfide.

Belongs to the HCP family. Requires [2Fe-2S] cluster as cofactor. Hybrid [4Fe-2O-2S] cluster is required as a cofactor.

The protein localises to the cytoplasm. It catalyses the reaction A + NH4(+) + H2O = hydroxylamine + AH2 + H(+). Functionally, catalyzes the reduction of hydroxylamine to form NH(3) and H(2)O. The chain is Hydroxylamine reductase from Shigella flexneri.